A 1051-amino-acid chain; its full sequence is Putative transcription factor SEF1 (1051 aa).

Over residues 1–10 (MSTDVSERGA) the composition is skewed to basic and acidic residues. 2 disordered regions span residues 1–54 (MSTD…SEES) and 67–90 (GQASPDRSKVSKQQNGASGHRPVT). Residues 11–21 (EAGSSSGLLSS) show a composition bias toward low complexity. Residues 92–122 (CTHCRQHKIKCNASENFPSSCSRCERMGLQC) constitute a DNA-binding region (zn(2)-C6 fungal-type). Residues 206–218 (SSVKSSVNTPSGS) show a composition bias toward low complexity. 3 disordered regions span residues 206-227 (SSVKSSVNTPSGSYSASAVDVS), 738-759 (EKNRKEQPVHTAATGSQDTEKR), and 927-968 (ASGN…QPAP).

It is found in the nucleus. Its function is as follows. Putative transcription factor. In Eremothecium gossypii (strain ATCC 10895 / CBS 109.51 / FGSC 9923 / NRRL Y-1056) (Yeast), this protein is Putative transcription factor SEF1 (SEF1).